Consider the following 394-residue polypeptide: Chalcone synthase 8 (394 aa).

Residue Cys165 is part of the active site.

This sequence belongs to the thiolase-like superfamily. Chalcone/stilbene synthases family.

It catalyses the reaction (E)-4-coumaroyl-CoA + 3 malonyl-CoA + 3 H(+) = 2',4,4',6'-tetrahydroxychalcone + 3 CO2 + 4 CoA. It functions in the pathway secondary metabolite biosynthesis; flavonoid biosynthesis. Functionally, the primary product of this enzyme is 4,2',4',6'-tetrahydroxychalcone (also termed naringenin-chalcone or chalcone) which can under specific conditions spontaneously isomerize into naringenin. The sequence is that of Chalcone synthase 8 (CHS8) from Bromheadia finlaysoniana (Orchid).